Here is a 933-residue protein sequence, read N- to C-terminus: Protein inturned (933 aa).

The segment at 1–54 (MASLPLCGSVRSPEGLPGDPSSQEDRQDYDPEDPVSGSGSYSPTSTDSNDLEPE) is disordered. The segment covering 37-48 (GSGSYSPTSTDS) has biased composition (polar residues). Residues 186–264 (LVGIIHQTKW…PMQVKLTFEN (79 aa)) form the PDZ domain. Residue Ser675 is modified to Phosphoserine. Residues 703–742 (LKTRKPSPSRSGGPDSGLEGEGVGLSPHTTESQGSHGSEE) form a disordered region. The span at 710–719 (PSRSGGPDSG) shows a compositional bias: low complexity. Residues 729–738 (PHTTESQGSH) show a composition bias toward polar residues.

Belongs to the inturned family. As to quaternary structure, component of the CPLANE (ciliogenesis and planar polarity effectors) complex, composed of INTU, FUZ and WDPCP. Interacts with CPLANE1. Interacts with NPHP4 and DAAM1; INTU is mediating the interaction between NPHP4 and DAAM1.

The protein resides in the cytoplasm. It is found in the cell surface. The protein localises to the cytoskeleton. Its subcellular location is the cilium basal body. It localises to the microtubule organizing center. The protein resides in the centrosome. It is found in the centriole. Plays a key role in ciliogenesis and embryonic development. Regulator of cilia formation by controlling the organization of the apical actin cytoskeleton and the positioning of the basal bodies at the apical cell surface, which in turn is essential for the normal orientation of elongating ciliary microtubules. Plays a key role in definition of cell polarity via its role in ciliogenesis but not via conversion extension. Has an indirect effect on hedgehog signaling. Proposed to function as core component of the CPLANE (ciliogenesis and planar polarity effectors) complex involved in the recruitment of peripheral IFT-A proteins to basal bodies. Required for recruitment of CPLANE2 to the mother centriole. Binds phosphatidylinositol 3-phosphate with highest affinity, followed by phosphatidylinositol 4-phosphate and phosphatidylinositol 5-phosphate. The protein is Protein inturned (INTU) of Bos taurus (Bovine).